A 61-amino-acid chain; its full sequence is UPF0434 protein PSPPH_1629 (61 aa).

It belongs to the UPF0434 family.

The chain is UPF0434 protein PSPPH_1629 from Pseudomonas savastanoi pv. phaseolicola (strain 1448A / Race 6) (Pseudomonas syringae pv. phaseolicola (strain 1448A / Race 6)).